The sequence spans 453 residues: UDP-N-acetylmuramoylalanine--D-glutamate ligase (453 aa).

119 to 125 (GSNGKTT) is a binding site for ATP.

It belongs to the MurCDEF family.

It is found in the cytoplasm. It catalyses the reaction UDP-N-acetyl-alpha-D-muramoyl-L-alanine + D-glutamate + ATP = UDP-N-acetyl-alpha-D-muramoyl-L-alanyl-D-glutamate + ADP + phosphate + H(+). It participates in cell wall biogenesis; peptidoglycan biosynthesis. Cell wall formation. Catalyzes the addition of glutamate to the nucleotide precursor UDP-N-acetylmuramoyl-L-alanine (UMA). This chain is UDP-N-acetylmuramoylalanine--D-glutamate ligase, found in Streptococcus uberis (strain ATCC BAA-854 / 0140J).